Consider the following 371-residue polypeptide: Alanine racemase (371 aa).

Lys-40 serves as the catalytic Proton acceptor; specific for D-alanine. The residue at position 40 (Lys-40) is an N6-(pyridoxal phosphate)lysine. Arg-138 lines the substrate pocket. The Proton acceptor; specific for L-alanine role is filled by Tyr-267. Met-314 serves as a coordination point for substrate.

Belongs to the alanine racemase family. The cofactor is pyridoxal 5'-phosphate.

It catalyses the reaction L-alanine = D-alanine. It functions in the pathway amino-acid biosynthesis; D-alanine biosynthesis; D-alanine from L-alanine: step 1/1. In terms of biological role, catalyzes the interconversion of L-alanine and D-alanine. May also act on other amino acids. The polypeptide is Alanine racemase (alr) (Ligilactobacillus salivarius (strain UCC118) (Lactobacillus salivarius)).